The primary structure comprises 137 residues: 2-iminobutanoate/2-iminopropanoate deaminase (137 aa).

Ser2 carries the post-translational modification N-acetylserine. Residues Lys13, Lys60, and Lys67 each carry the N6-succinyllysine modification. Thr74 carries the post-translational modification Phosphothreonine.

The protein belongs to the RutC family. As to quaternary structure, homotrimer. Interacts with YTHDF2. Liver and kidney.

The protein localises to the cytoplasm. It localises to the nucleus. Its subcellular location is the peroxisome. The protein resides in the mitochondrion. It catalyses the reaction 2-iminobutanoate + H2O = 2-oxobutanoate + NH4(+). It carries out the reaction 2-iminopropanoate + H2O = pyruvate + NH4(+). In terms of biological role, catalyzes the hydrolytic deamination of enamine/imine intermediates that form during the course of normal metabolism. May facilitate the release of ammonia from these potentially toxic reactive metabolites, reducing their impact on cellular components. It may act on enamine/imine intermediates formed by several types of pyridoxal-5'-phosphate-dependent dehydratases including L-threonine dehydratase. Also promotes endoribonucleolytic cleavage of some transcripts by promoting recruitment of the ribonuclease P/MRP complex. Acts by bridging YTHDF2 and the ribonuclease P/MRP complex. RIDA/HRSP12 binds to N6-methyladenosine (m6A)-containing mRNAs containing a 5'-GGUUC-3' motif: cooperative binding of RIDA/HRSP12 and YTHDF2 to such transcripts lead to recruitment of the ribonuclease P/MRP complex and subsequent endoribonucleolytic cleavage. This is 2-iminobutanoate/2-iminopropanoate deaminase from Rattus norvegicus (Rat).